We begin with the raw amino-acid sequence, 265 residues long: MNNLYRDLAPVTEAAWGEIELEASRTFKRHVAGRRVVDVSEPGGPAAAAVSTGRLIDVEAPTNGVVAHLRASKPLVRLRVPFTLSRYEIDNVERGANDSDWDPVKEAAKKLAFVEDRAIFEGYAAASIDGIRSASSNKPLALPADPREIPDVITQAISELRLAGVDGPYSVLLSADVYTKVSETTEHGYPILEHIDRLVPGDIIWAPAIDGAFVLTTRGGDFDLQLGTDVSIGYTSHDADTVQLYLQETLTFLCYTAEAAVPLTS.

It belongs to the encapsulin family. Family 1 subfamily. Found in a complex with DyP, suggesting it is the native cargo protein. Monomers form pentamers, which assemble to form hollow shells composed of 60 subunits with several openings.

It is found in the encapsulin nanocompartment. The protein resides in the cell membrane. Its function is as follows. Shell component of a type 1 encapsulin nanocompartment. Assembles into proteinaceous shells 23-24 nm in diameter with 2-2.5 nm thick walls. Cargo protein DyP is targeted to the interior via its C-terminal extension; probably only 1 DyP hexamer is incorporated into each shell. Probably involved in protection against oxidative damage. The protein is Type 1 encapsulin shell protein of Mycolicibacterium paratuberculosis (strain ATCC BAA-968 / K-10) (Mycobacterium paratuberculosis).